The sequence spans 324 residues: MATH domain and coiled-coil domain-containing protein At3g44790 (324 aa).

In terms of domain architecture, MATH spans 3–125 (YEKFTWVIKN…NNEVKIVVEV (123 aa)). Residues 241–309 (FKVDWLERKL…ALLEKEKAKS (69 aa)) adopt a coiled-coil conformation.

This chain is MATH domain and coiled-coil domain-containing protein At3g44790, found in Arabidopsis thaliana (Mouse-ear cress).